Here is a 255-residue protein sequence, read N- to C-terminus: MLHIGGKTFTSRLLLGTGKYPSFEVQKEAVNVSEAEILTFAVRRMNIFEASQPNFLEQLDLSKYTLLPNTAGASTADEAVRIARLAKASGLCDMIKVEVIGCSRSLLPDPVETLKASEMLLEEGFIVLPYTSDDVVLARKLEELGVHAIMPGASPIGSGQGLLNPLNLSFIIEQAKVPVIIDAGVGSPKDAAYAMELGADAVLLNTAVSGAKDPVKMAKAMKLAIESGRLGFEAGRIPLKNYGTASSPQEGMPAF.

Catalysis depends on Lys96, which acts as the Schiff-base intermediate with DXP. 1-deoxy-D-xylulose 5-phosphate-binding positions include Gly157, 183-184, and 205-206; these read AG and NT.

The protein belongs to the ThiG family. In terms of assembly, homotetramer. Forms heterodimers with either ThiH or ThiS.

It is found in the cytoplasm. The catalysed reaction is [ThiS sulfur-carrier protein]-C-terminal-Gly-aminoethanethioate + 2-iminoacetate + 1-deoxy-D-xylulose 5-phosphate = [ThiS sulfur-carrier protein]-C-terminal Gly-Gly + 2-[(2R,5Z)-2-carboxy-4-methylthiazol-5(2H)-ylidene]ethyl phosphate + 2 H2O + H(+). It participates in cofactor biosynthesis; thiamine diphosphate biosynthesis. Its function is as follows. Catalyzes the rearrangement of 1-deoxy-D-xylulose 5-phosphate (DXP) to produce the thiazole phosphate moiety of thiamine. Sulfur is provided by the thiocarboxylate moiety of the carrier protein ThiS. In vitro, sulfur can be provided by H(2)S. This Bacillus pumilus (strain SAFR-032) protein is Thiazole synthase.